The following is a 569-amino-acid chain: uncharacterized protein (569 aa).

An N-terminal signal peptide occupies residues 1 to 24; the sequence is MKFQRKYWGLLSTLGVSSAVALSA. The N-palmitoyl cysteine moiety is linked to residue Cys-25. The S-diacylglycerol cysteine moiety is linked to residue Cys-25. Disordered regions lie at residues 111–137 and 242–267; these read SNMK…EWEV and GKNG…KKIE. Composition is skewed to low complexity over residues 119 to 130 and 249 to 260; these read SSSSSSTGNNGS and KKMTTDSSSTQQ.

To M.pneumoniae MPN_456 and M.genitalium MG321 N-terminal region.

It is found in the cell membrane. This is an uncharacterized protein from Mycoplasma pneumoniae (strain ATCC 29342 / M129 / Subtype 1) (Mycoplasmoides pneumoniae).